The primary structure comprises 277 residues: Large ribosomal subunit protein uL2 (277 aa).

2 disordered regions span residues 24-55 (ITTS…RHHG) and 221-277 (RGSV…RKKK).

The protein belongs to the universal ribosomal protein uL2 family. As to quaternary structure, part of the 50S ribosomal subunit. Forms a bridge to the 30S subunit in the 70S ribosome.

Functionally, one of the primary rRNA binding proteins. Required for association of the 30S and 50S subunits to form the 70S ribosome, for tRNA binding and peptide bond formation. It has been suggested to have peptidyltransferase activity; this is somewhat controversial. Makes several contacts with the 16S rRNA in the 70S ribosome. The protein is Large ribosomal subunit protein uL2 of Listeria welshimeri serovar 6b (strain ATCC 35897 / DSM 20650 / CCUG 15529 / CIP 8149 / NCTC 11857 / SLCC 5334 / V8).